We begin with the raw amino-acid sequence, 804 residues long: Phosphatidylinositol 4-kinase beta (804 aa).

Residues 55 to 245 enclose the PIK helical domain; it reads LEKVKMIHGS…GTKLRKLILS (191 aa). Disordered stretches follow at residues 69–122 and 251–309; these read LDKV…ARRR and AHKK…EPVR. Composition is skewed to polar residues over residues 91–103 and 281–300; these read KLTNTGHTSTSSR and DATVSISLSSNLKRTSSNPK. Residues 523–789 form the PI3K/PI4K catalytic domain; that stretch reads EPWEEKVRRI…MVDGSMRSIT (267 aa). The G-loop stretch occupies residues 529-535; the sequence is VRRIREG. Positions 656–664 are catalytic loop; that stretch reads QVKDRHNGN. The segment at 675-699 is activation loop; it reads HIDFGFILSSSPRNLGFETSAFKLT.

It belongs to the PI3/PI4-kinase family. Type III PI4K subfamily. Mg(2+) is required as a cofactor. Mn(2+) serves as cofactor.

The protein localises to the endomembrane system. It localises to the mitochondrion outer membrane. Its subcellular location is the rough endoplasmic reticulum membrane. It carries out the reaction a 1,2-diacyl-sn-glycero-3-phospho-(1D-myo-inositol) + ATP = a 1,2-diacyl-sn-glycero-3-phospho-(1D-myo-inositol 4-phosphate) + ADP + H(+). Phosphorylates phosphatidylinositol (PI) in the first committed step in the production of the second messenger inositol-1,4,5,-trisphosphate (PIP). May play an important role in the inner ear development. This is Phosphatidylinositol 4-kinase beta (pi4kb) from Xenopus laevis (African clawed frog).